We begin with the raw amino-acid sequence, 119 residues long: LELDETIRTVPLNDKGGTVVLSLEQVKEGKLFNYACAQCHAGGVTKTNQNVGLEPEALAGALPNRMKNPTTYDGEEEISEIPSIKSANIFRNLTDEDLKAIAEHILLEPLVVGTKWGGK.

The heme c site is built by Cys36, Cys39, and His40.

The protein belongs to the cytochrome c family. PsbV subfamily. In terms of assembly, PSII is composed of 1 copy each of membrane proteins PsbA, PsbB, PsbC, PsbD, PsbE, PsbF, PsbH, PsbI, PsbJ, PsbK, PsbL, PsbM, PsbT, PsbX, PsbY, PsbZ, Psb30/Ycf12, peripheral proteins PsbO, CyanoQ (PsbQ), PsbU, PsbV and a large number of cofactors. It forms dimeric complexes. Requires heme c as cofactor.

The protein localises to the cellular thylakoid membrane. Its function is as follows. One of the extrinsic, lumenal subunits of photosystem II (PSII). PSII is a light-driven water plastoquinone oxidoreductase, using light energy to abstract electrons from H(2)O, generating a proton gradient subsequently used for ATP formation. The extrinsic proteins stabilize the structure of photosystem II oxygen-evolving complex (OEC), the ion environment of oxygen evolution and protect the OEC against heat-induced inactivation. Low-potential cytochrome c that plays a role in the OEC of PSII. In Aphanizomenon flos-aquae, this protein is Photosystem II extrinsic protein V (psbV).